The following is a 299-amino-acid chain: 4-hydroxy-tetrahydrodipicolinate synthase (299 aa).

Threonine 47 contributes to the pyruvate binding site. Tyrosine 136 acts as the Proton donor/acceptor in catalysis. Residue lysine 164 is the Schiff-base intermediate with substrate of the active site. Position 205 (alanine 205) interacts with pyruvate.

The protein belongs to the DapA family. Homotetramer; dimer of dimers.

It is found in the cytoplasm. The catalysed reaction is L-aspartate 4-semialdehyde + pyruvate = (2S,4S)-4-hydroxy-2,3,4,5-tetrahydrodipicolinate + H2O + H(+). Its pathway is amino-acid biosynthesis; L-lysine biosynthesis via DAP pathway; (S)-tetrahydrodipicolinate from L-aspartate: step 3/4. In terms of biological role, catalyzes the condensation of (S)-aspartate-beta-semialdehyde [(S)-ASA] and pyruvate to 4-hydroxy-tetrahydrodipicolinate (HTPA). In Pediococcus pentosaceus (strain ATCC 25745 / CCUG 21536 / LMG 10740 / 183-1w), this protein is 4-hydroxy-tetrahydrodipicolinate synthase.